A 103-amino-acid chain; its full sequence is Large ribosomal subunit protein bL21 (103 aa).

It belongs to the bacterial ribosomal protein bL21 family. As to quaternary structure, part of the 50S ribosomal subunit. Contacts protein L20.

In terms of biological role, this protein binds to 23S rRNA in the presence of protein L20. This Chloroflexus aurantiacus (strain ATCC 29364 / DSM 637 / Y-400-fl) protein is Large ribosomal subunit protein bL21.